Consider the following 304-residue polypeptide: Nucleotide-binding protein SH2124 (304 aa).

19–26 (GLSGAGKS) serves as a coordination point for ATP. 70–73 (DLRG) is a GTP binding site.

The protein belongs to the RapZ-like family.

Functionally, displays ATPase and GTPase activities. The chain is Nucleotide-binding protein SH2124 from Staphylococcus haemolyticus (strain JCSC1435).